Consider the following 90-residue polypeptide: Progonadoliberin-3 (90 aa).

Positions 1–23 are cleaved as a signal peptide; the sequence is MDVSSKVVVQVLLLALVVQVTLC. Glutamine 24 carries the pyrrolidone carboxylic acid modification. Glycine 33 is modified (glycine amide).

It belongs to the GnRH family. In terms of tissue distribution, expressed in neuron cell bodies of the nucleus olfactoretinalis.

Its subcellular location is the secreted. Stimulates the secretion of gonadotropins. The protein is Progonadoliberin-3 (gnrh3) of Oryzias latipes (Japanese rice fish).